The chain runs to 331 residues: MEFYASLKSIAMHVPSERVKNAEFQQFLDTSDEWIEKRTGIKERRFANDEEKSSDLGVIAAKQAIERAHLTPKDIDLVVVATLSPDFLAMPSTACVLSAKLGIENKPAFDISAACTGFIYLLSVAKAYVESGMCENVLIVGAEKTSSVLDFKDRGTCILFGDGAGACVIGRTKRLKESVLDVQISANGNFSNYLYTPRTLKPTPFNAKEEASEPFLRMKGNEVFKLAVKTLLKDVEMILEKNALKPEDVRLFIPHQANFRIIQAVREHLDFKDEQVVLTVHKYGNTSAASIPMAMCEAYEEGRLKKGDLMLLDAFGGGLTWGSALVYFGGS.

Active-site residues include Cys115 and His255. An ACP-binding region spans residues 256–260; it reads QANFR. Asn285 is a catalytic residue.

The protein belongs to the thiolase-like superfamily. FabH family. In terms of assembly, homodimer.

The protein localises to the cytoplasm. The enzyme catalyses malonyl-[ACP] + acetyl-CoA + H(+) = 3-oxobutanoyl-[ACP] + CO2 + CoA. It functions in the pathway lipid metabolism; fatty acid biosynthesis. Catalyzes the condensation reaction of fatty acid synthesis by the addition to an acyl acceptor of two carbons from malonyl-ACP. Catalyzes the first condensation reaction which initiates fatty acid synthesis and may therefore play a role in governing the total rate of fatty acid production. Possesses both acetoacetyl-ACP synthase and acetyl transacylase activities. Its substrate specificity determines the biosynthesis of branched-chain and/or straight-chain of fatty acids. The polypeptide is Beta-ketoacyl-[acyl-carrier-protein] synthase III (Helicobacter pylori (strain Shi470)).